A 242-amino-acid polypeptide reads, in one-letter code: Agamous-like MADS-box protein MADS4 (242 aa).

Positions 1–61 (MGRGRVELKR…GKLYEFCSSS (61 aa)) constitute an MADS-box domain. The K-box domain occupies 89–185 (ELSSQQEYLK…GTQVNQLQWN (97 aa)).

Expressed in flowers and seeds.

The protein resides in the nucleus. In terms of biological role, probable transcription factor involved in flower development. The polypeptide is Agamous-like MADS-box protein MADS4 (Vitis vinifera (Grape)).